Reading from the N-terminus, the 416-residue chain is Probable glucan 1,3-beta-glucosidase A (416 aa).

The first 22 residues, 1 to 22 (MFVESAKKALLALSLLAASAQA), serve as a signal peptide directing secretion. An N-linked (GlcNAc...) asparagine glycan is attached at Asn-183. Glu-210 functions as the Proton donor in the catalytic mechanism. 2 disulfide bridges follow: Cys-290/Cys-415 and Cys-316/Cys-342. Glu-308 acts as the Nucleophile in catalysis.

Belongs to the glycosyl hydrolase 5 (cellulase A) family. Monomer. Mn(2+) is required as a cofactor.

It localises to the secreted. The enzyme catalyses Successive hydrolysis of beta-D-glucose units from the non-reducing ends of (1-&gt;3)-beta-D-glucans, releasing alpha-glucose.. Beta-glucanases participate in the metabolism of beta-glucan, the main structural component of the cell wall. It could also function biosynthetically as a transglycosylase. This chain is Probable glucan 1,3-beta-glucosidase A (exgA), found in Aspergillus niger (strain ATCC MYA-4892 / CBS 513.88 / FGSC A1513).